A 323-amino-acid polypeptide reads, in one-letter code: GDSL esterase/lipase At5g03980 (323 aa).

Residues 1–21 (MSTTKALSLLVFILFVSLVHS) form the signal peptide. S36 acts as the Nucleophile in catalysis. Residue N77 is glycosylated (N-linked (GlcNAc...) asparagine). Residues D294 and H297 contribute to the active site.

The protein belongs to the 'GDSL' lipolytic enzyme family.

It localises to the secreted. The chain is GDSL esterase/lipase At5g03980 from Arabidopsis thaliana (Mouse-ear cress).